The chain runs to 536 residues: Glutamyl-tRNA(Gln) amidotransferase subunit B, mitochondrial (536 aa).

Residues 1–8 (MLRVHRLY) constitute a mitochondrion transit peptide.

It belongs to the GatB/GatE family. GatB subfamily. As to quaternary structure, subunit of the heterotrimeric GatFAB amidotransferase (AdT) complex, composed of A, B and F subunits.

It is found in the mitochondrion. It catalyses the reaction L-glutamyl-tRNA(Gln) + L-glutamine + ATP + H2O = L-glutaminyl-tRNA(Gln) + L-glutamate + ADP + phosphate + H(+). In terms of biological role, allows the formation of correctly charged Gln-tRNA(Gln) through the transamidation of misacylated Glu-tRNA(Gln) in the mitochondria. The reaction takes place in the presence of glutamine and ATP through an activated gamma-phospho-Glu-tRNA(Gln). The sequence is that of Glutamyl-tRNA(Gln) amidotransferase subunit B, mitochondrial from Eremothecium gossypii (strain ATCC 10895 / CBS 109.51 / FGSC 9923 / NRRL Y-1056) (Yeast).